Here is an 857-residue protein sequence, read N- to C-terminus: Leucine--tRNA ligase (857 aa).

The 'HIGH' region signature appears at 42–52; it reads PYPSGNLHMGH. Residues 615–619 carry the 'KMSKS' region motif; the sequence is KMSKS. ATP is bound at residue K618.

This sequence belongs to the class-I aminoacyl-tRNA synthetase family.

It localises to the cytoplasm. It catalyses the reaction tRNA(Leu) + L-leucine + ATP = L-leucyl-tRNA(Leu) + AMP + diphosphate. The polypeptide is Leucine--tRNA ligase (Thermosynechococcus vestitus (strain NIES-2133 / IAM M-273 / BP-1)).